The following is a 256-amino-acid chain: MKEPLKIGLMDSGMGGLSVLKELLKYDSELEIVYYGDLKNSPYGEKDASEVLELVRSVCNFLQKENVSAILLACNTATSAAAQTLRKEFSIPIFGMEPAIKPAILQNPGKKVALLATPVTQREEKLQRLKSELKAEELVLSISCPGLAGLVDQGDFDKAEKYLRPILANLQEQDVENLVLGCTHYVFLKQIILKNFPNVKIYDGNSGTIKHLLNSLQVPRVILNGSQNNRSIYKLILNSEKEFHFRLASELLSLKE.

Substrate-binding positions include 11-12 (DS) and 43-44 (YG). The active-site Proton donor/acceptor is Cys74. Substrate is bound at residue 75–76 (NT). Residue Cys182 is the Proton donor/acceptor of the active site. 183–184 (TH) contacts substrate.

This sequence belongs to the aspartate/glutamate racemases family.

It catalyses the reaction L-glutamate = D-glutamate. Its pathway is cell wall biogenesis; peptidoglycan biosynthesis. Its function is as follows. Provides the (R)-glutamate required for cell wall biosynthesis. This chain is Glutamate racemase, found in Leptospira interrogans serogroup Icterohaemorrhagiae serovar Lai (strain 56601).